The primary structure comprises 741 residues: Methionine--tRNA ligase (741 aa).

Positions 11–21 (PYANGPIHAGH) match the 'HIGH' region motif. Zn(2+)-binding residues include C143, C146, C156, and C159. The 'KMSKS' region signature appears at 345 to 349 (KFSTS). Residue T348 coordinates ATP. In terms of domain architecture, tRNA-binding spans 641–741 (EFAKLDLRVG…KEVKLGARIR (101 aa)).

It belongs to the class-I aminoacyl-tRNA synthetase family. MetG type 1 subfamily. As to quaternary structure, homodimer. Zn(2+) is required as a cofactor.

It localises to the cytoplasm. It carries out the reaction tRNA(Met) + L-methionine + ATP = L-methionyl-tRNA(Met) + AMP + diphosphate. Is required not only for elongation of protein synthesis but also for the initiation of all mRNA translation through initiator tRNA(fMet) aminoacylation. The sequence is that of Methionine--tRNA ligase from Thermococcus kodakarensis (strain ATCC BAA-918 / JCM 12380 / KOD1) (Pyrococcus kodakaraensis (strain KOD1)).